Here is a 300-residue protein sequence, read N- to C-terminus: N-acetylmuramic acid 6-phosphate etherase (300 aa).

In terms of domain architecture, SIS spans I57 to K220. E85 functions as the Proton donor in the catalytic mechanism. E116 is a catalytic residue.

This sequence belongs to the GCKR-like family. MurNAc-6-P etherase subfamily. Homodimer.

It carries out the reaction N-acetyl-D-muramate 6-phosphate + H2O = N-acetyl-D-glucosamine 6-phosphate + (R)-lactate. Its pathway is amino-sugar metabolism; 1,6-anhydro-N-acetylmuramate degradation. The protein operates within amino-sugar metabolism; N-acetylmuramate degradation. It functions in the pathway cell wall biogenesis; peptidoglycan recycling. Specifically catalyzes the cleavage of the D-lactyl ether substituent of MurNAc 6-phosphate, producing GlcNAc 6-phosphate and D-lactate. Together with AnmK, is also required for the utilization of anhydro-N-acetylmuramic acid (anhMurNAc) either imported from the medium or derived from its own cell wall murein, and thus plays a role in cell wall recycling. This chain is N-acetylmuramic acid 6-phosphate etherase, found in Aliivibrio fischeri (strain ATCC 700601 / ES114) (Vibrio fischeri).